A 122-amino-acid chain; its full sequence is Large ribosomal subunit protein uL14 (122 aa).

The protein belongs to the universal ribosomal protein uL14 family. In terms of assembly, part of the 50S ribosomal subunit. Forms a cluster with proteins L3 and L19. In the 70S ribosome, L14 and L19 interact and together make contacts with the 16S rRNA in bridges B5 and B8.

Its function is as follows. Binds to 23S rRNA. Forms part of two intersubunit bridges in the 70S ribosome. This Mycobacterium marinum (strain ATCC BAA-535 / M) protein is Large ribosomal subunit protein uL14.